The primary structure comprises 581 residues: Meiotic PUF family protein 1 (581 aa).

The PUM-HD domain occupies 225–580 (FPNGTTEPFE…RIAALVEKSK (356 aa)). Pumilio repeat units lie at residues 291-326 (TILP…SFSY), 327-362 (FLKK…NLIE), 363-398 (ELIE…GIFD), 403-438 (KMQG…TCLD), 439-474 (EIIN…RILN), 475-510 (SLLK…RYVK), 518-554 (ELPT…LMAE), and 555-581 (HLKK…KSKS).

Its function is as follows. RNA-binding protein essential for meiotic progression. This Schizosaccharomyces pombe (strain 972 / ATCC 24843) (Fission yeast) protein is Meiotic PUF family protein 1 (mpf1).